The primary structure comprises 553 residues: RNA exonuclease 1 (553 aa).

Serine 24 is subject to Phosphoserine. Residues 167–194 (MEKINKLKELQKKKKITINDLVLSEQQL) adopt a coiled-coil conformation. Residues 225–373 (IFALDCEMCL…EDARACLELT (149 aa)) enclose the Exonuclease domain. Residues 509–533 (WNNLSTELEFIQDKKERLDKRRERE) are a coiled coil.

It belongs to the REXO1/REXO3 family.

The protein localises to the nucleus. Its function is as follows. 3' exoribonuclease required for 5S rRNA maturation and for the proper maturation of the 5' cistron of the tRNA-Arg3 dicistronic gene. Involved with REX2 in the maturation of the 5.8S rRNA, and with REX2 and REX3, in the 3' processing of the U5L snRNA. The polypeptide is RNA exonuclease 1 (RNH70) (Saccharomyces cerevisiae (strain ATCC 204508 / S288c) (Baker's yeast)).